The primary structure comprises 259 residues: Ribosomal RNA small subunit methyltransferase A (259 aa).

6 residues coordinate S-adenosyl-L-methionine: N13, L15, G40, E61, D85, and N103.

It belongs to the class I-like SAM-binding methyltransferase superfamily. rRNA adenine N(6)-methyltransferase family. RsmA subfamily.

It localises to the cytoplasm. It carries out the reaction adenosine(1518)/adenosine(1519) in 16S rRNA + 4 S-adenosyl-L-methionine = N(6)-dimethyladenosine(1518)/N(6)-dimethyladenosine(1519) in 16S rRNA + 4 S-adenosyl-L-homocysteine + 4 H(+). Its function is as follows. Specifically dimethylates two adjacent adenosines (A1518 and A1519) in the loop of a conserved hairpin near the 3'-end of 16S rRNA in the 30S particle. May play a critical role in biogenesis of 30S subunits. The polypeptide is Ribosomal RNA small subunit methyltransferase A (Neisseria meningitidis serogroup B (strain ATCC BAA-335 / MC58)).